The sequence spans 934 residues: Complement component C6 (934 aa).

Residues 1–21 (MARRSVLYFILLNALINKGQA) form the signal peptide. 11 disulfide bridges follow: cysteine 22–cysteine 61, cysteine 24–cysteine 65, cysteine 35–cysteine 73, cysteine 39–cysteine 78, cysteine 82–cysteine 117, cysteine 93–cysteine 127, cysteine 96–cysteine 133, cysteine 140–cysteine 151, cysteine 146–cysteine 164, cysteine 158–cysteine 173, and cysteine 180–cysteine 218. TSP type-1 domains lie at 22-79 (CFCD…QRCP) and 81-134 (NCLL…KLCK). Tryptophan 29 carries C-linked (Man) tryptophan glycosylation. Tryptophan 32 carries C-linked (Man) tryptophan; partial glycosylation. O-linked (Fuc...) threonine glycosylation is present at threonine 38. Tryptophan 90 carries a C-linked (Man) tryptophan; partial glycan. One can recognise an LDL-receptor class A domain in the interval 138-175 (ADCKNKFRCDSGRCIARKLECNGENDCGDNSDERDCGR). Leucine 156, asparagine 159, glutamate 161, aspartate 163, aspartate 169, and glutamate 170 together coordinate Ca(2+). Positions 176–522 (TKAVCTRKYN…EYAAKFDPCQ (347 aa)) constitute an MACPF domain. The chain crosses the membrane as a beta stranded span at residues 278–290 (SFSVPIFYSSKRS). Asparagine 324 carries N-linked (GlcNAc...) asparagine glycosylation. Threonine 392 is a glycosylation site (O-linked (Fuc...) threonine). 16 disulfides stabilise this stretch: cysteine 399-cysteine 420, cysteine 499-cysteine 623, cysteine 521-cysteine 570, cysteine 523-cysteine 539, cysteine 526-cysteine 541, cysteine 543-cysteine 552, cysteine 577-cysteine 611, cysteine 589-cysteine 601, cysteine 644-cysteine 686, cysteine 672-cysteine 699, cysteine 704-cysteine 746, cysteine 732-cysteine 761, cysteine 773-cysteine 823, cysteine 784-cysteine 801, cysteine 786-cysteine 837, and cysteine 793-cysteine 816. The beta stranded transmembrane segment at 402 to 415 (IETKKRVLFAKKTK) threads the bilayer. The EGF-like domain occupies 523 to 553 (CAPCPNNGRPTLSGTECLCVCQSGTYGENCE). The TSP type-1 3 domain occupies 565–612 (DGQWGCWSSWSTCDATYKRSRTRECNNPAPQRGGKRCEGEKRQEEDCT). C-linked (Man) tryptophan; partial glycosylation is found at tryptophan 568, tryptophan 571, and tryptophan 574. CCP stretches follow at residues 611–688 (CTFS…RCLP) and 689–765 (DGTW…EKDT). Sushi domains follow at residues 642–701 (SGCP…ECQR) and 702–763 (TECI…TCEK). A C5b-binding domain region spans residues 642–934 (SGCPQPVPPE…EILHPGKCLA (293 aa)). A factor I module (FIM) 1 region spans residues 766–840 (LTKLKGHCQL…FLHIGSCQDG (75 aa)). Residues 780–839 (SGSECICMSPEEDCSHHSEDLCVFDTDSNDYFTSPACKFLAEKCLNNQQLHFLHIGSCQD) form the Kazal-like 1 domain. Asparagine 855 carries an N-linked (GlcNAc...) asparagine glycan. Residues 858-934 (KKESCGYDTC…EILHPGKCLA (77 aa)) are factor I module (FIM) 2. Disulfide bonds link cysteine 862-cysteine 873, cysteine 867-cysteine 919, cysteine 880-cysteine 897, cysteine 882-cysteine 932, and cysteine 888-cysteine 912. The 59-residue stretch at 876 to 934 (STSKCVCLLPPQCFKGGNQLYCVKMGSSTSEKTLNICEVGTIRCANRKMEILHPGKCLA) folds into the Kazal-like 2 domain.

This sequence belongs to the complement C6/C7/C8/C9 family. Component of the membrane attack complex (MAC), composed of complement C5b, C6, C7, C8A, C8B, C8G and multiple copies of the pore-forming subunit C9. Post-translationally, all cysteine residues are assumed to be cross-linked to one another. Individual modules containing an even number of conserved cysteine residues are supposed to have disulfide linkages only within the same module.

It is found in the secreted. Its subcellular location is the target cell membrane. Its activity is regulated as follows. Membrane attack complex (MAC) assembly is inhibited by CD59, thereby protecting self-cells from damage during complement activation. MAC assembly is also inhibited by clusterin (CLU) chaperones that inhibit polymerization of C9. In terms of biological role, component of the membrane attack complex (MAC), a multiprotein complex activated by the complement cascade, which inserts into a target cell membrane and forms a pore, leading to target cell membrane rupture and cell lysis. The MAC is initiated by proteolytic cleavage of C5 into complement C5b in response to the classical, alternative, lectin and GZMK complement pathways. The complement pathways consist in a cascade of proteins that leads to phagocytosis and breakdown of pathogens and signaling that strengthens the adaptive immune system. Together with component C5b, involved in MAC complex assembly: complement C5b and C6 associate with the outer leaflet of target cell membrane, reducing the energy for membrane bending. The chain is Complement component C6 from Homo sapiens (Human).